The chain runs to 80 residues: MKASLFAVIFGLVVLCACSFAEDQFASPNELLKSMFVESTHELTPEVEGRYCQKWMWTCDAERKCCEDMACELWCKKRLG.

The signal sequence occupies residues 1–21; it reads MKASLFAVIFGLVVLCACSFA. Positions 22–50 are excised as a propeptide; that stretch reads EDQFASPNELLKSMFVESTHELTPEVEGR. Cystine bridges form between C52–C66, C59–C71, and C65–C75. Leucine amide is present on L79.

It belongs to the neurotoxin 30 (phrixotoxin) family. As to expression, expressed by the venom gland.

The protein localises to the secreted. Its function is as follows. Probable ion channel inhibitor. Shows insecticidal activity when injected into mealworms. This chain is U4-theraphotoxin-Spl1a, found in Selenotypus plumipes (Australian featherleg tarantula).